The sequence spans 948 residues: Insulin receptor substrate 1 (948 aa).

One can recognise a PH domain in the interval 8–109 (GMALSGYLKK…WLDKLLVLQR (102 aa)). An IRS-type PTB domain is found at 122–236 (YDQVWQVVIQ…SAMSAKTESN (115 aa)). Residues 247–270 (PDLSHEPMRKRSSSANEASKPINV) are disordered. 2 positions are modified to phosphoserine: Ser-286 and Ser-287. Residues 304–329 (RNGTLSESSNQTYFGSNHGLRSNTIS) are compositionally biased toward polar residues. The tract at residues 304 to 373 (RNGTLSESSN…SDDNGSFSHY (70 aa)) is disordered. Position 342 is a phosphoserine (Ser-342). The residue at position 410 (Tyr-410) is a Phosphotyrosine; by INSR. A YXXM motif 1 motif is present at residues 410-413 (YIPM). The interval 528–559 (ANRSQSSITKEGTSYSTSSNRQKKSTSAPLLS) is disordered. Residues 529–556 (NRSQSSITKEGTSYSTSSNRQKKSTSAP) are compositionally biased toward polar residues. Ser-554 is subject to Phosphoserine. The short motif at 640–643 (YLEM) is the YXXM motif 2 element. The tract at residues 703–734 (EKKSNSPLNETPCSLKPTDVESNSHDEHSTNN) is disordered. Positions 720–731 (TDVESNSHDEHS) are enriched in basic and acidic residues. Residue Tyr-891 is modified to Phosphotyrosine; by INSR. A disordered region spans residues 907–948 (YLKRGSRESPPVSACPGDGNTYAKIDFDQSDSSSSSSNIFNT). Phosphoserine is present on residues Ser-912 and Ser-915. Tyr-928 carries the post-translational modification Phosphotyrosine; by INSR. Positions 936–948 (SDSSSSSSNIFNT) are enriched in low complexity.

Bindings to phosphatidylinositol 3-kinase and SHP2.

Activates phosphatidylinositol 3-kinase when bound to the regulatory p85 subunit. May mediate the control of various cellular processes by insulin-like peptides. When phosphorylated by the insulin receptor binds specifically to various cellular proteins containing SH2 domains. Involved in control of cell proliferation, cell size, and body and organ growth throughout development. Also has a role in a signaling pathway controlling the physiological response required to endure periods of low nutrient conditions. Insulin/insulin-like growth factor (IGF) signaling pathway has a role in regulating aging and is necessary in the ovary for vitellogenic maturation. This is Insulin receptor substrate 1 from Drosophila erecta (Fruit fly).